The chain runs to 342 residues: Holliday junction branch migration complex subunit RuvB (342 aa).

The large ATPase domain (RuvB-L) stretch occupies residues 1 to 179; that stretch reads MTNILSPEKS…FGIPMRLNFY (179 aa). ATP-binding positions include Ile-18, Arg-19, Gly-60, Lys-63, Thr-64, Thr-65, 126-128, Arg-169, Tyr-179, and Arg-216; that span reads EDF. Thr-64 lines the Mg(2+) pocket. Residues 180–250 are small ATPAse domain (RuvB-S); the sequence is NTEELKKVLN…VSDFGLNRLE (71 aa). The head domain (RuvB-H) stretch occupies residues 253–342; it reads RIGLDSNDYR…HQFNIFNENE (90 aa). DNA is bound by residues Arg-289, Arg-308, and Arg-313.

Belongs to the RuvB family. In terms of assembly, homohexamer. Forms an RuvA(8)-RuvB(12)-Holliday junction (HJ) complex. HJ DNA is sandwiched between 2 RuvA tetramers; dsDNA enters through RuvA and exits via RuvB. An RuvB hexamer assembles on each DNA strand where it exits the tetramer. Each RuvB hexamer is contacted by two RuvA subunits (via domain III) on 2 adjacent RuvB subunits; this complex drives branch migration. In the full resolvosome a probable DNA-RuvA(4)-RuvB(12)-RuvC(2) complex forms which resolves the HJ.

It localises to the cytoplasm. It carries out the reaction ATP + H2O = ADP + phosphate + H(+). In terms of biological role, the RuvA-RuvB-RuvC complex processes Holliday junction (HJ) DNA during genetic recombination and DNA repair, while the RuvA-RuvB complex plays an important role in the rescue of blocked DNA replication forks via replication fork reversal (RFR). RuvA specifically binds to HJ cruciform DNA, conferring on it an open structure. The RuvB hexamer acts as an ATP-dependent pump, pulling dsDNA into and through the RuvAB complex. RuvB forms 2 homohexamers on either side of HJ DNA bound by 1 or 2 RuvA tetramers; 4 subunits per hexamer contact DNA at a time. Coordinated motions by a converter formed by DNA-disengaged RuvB subunits stimulates ATP hydrolysis and nucleotide exchange. Immobilization of the converter enables RuvB to convert the ATP-contained energy into a lever motion, pulling 2 nucleotides of DNA out of the RuvA tetramer per ATP hydrolyzed, thus driving DNA branch migration. The RuvB motors rotate together with the DNA substrate, which together with the progressing nucleotide cycle form the mechanistic basis for DNA recombination by continuous HJ branch migration. Branch migration allows RuvC to scan DNA until it finds its consensus sequence, where it cleaves and resolves cruciform DNA. The polypeptide is Holliday junction branch migration complex subunit RuvB (Rickettsia rickettsii (strain Sheila Smith)).